The sequence spans 1910 residues: C2 domain-containing protein (1910 aa).

The segment covering 1 to 28 (MMKLKEMVEAAEAKVESKPPQAAEEKAP) has biased composition (basic and acidic residues). 3 disordered regions span residues 1-54 (MMKL…EPLD), 355-377 (AMKL…PEDG), and 398-428 (LEEL…DGPQ). Positions 414–423 (KGEDKKDGNK) are enriched in basic and acidic residues. In terms of domain architecture, C2 spans 557 to 678 (QLGEVSESDS…FFNEKHNKRN (122 aa)). 2 stretches are compositionally biased toward basic and acidic residues: residues 1192–1205 (LAQK…DAQR) and 1215–1228 (GHEG…DKQG). Disordered stretches follow at residues 1192 to 1267 (LAQK…VKKG), 1405 to 1424 (ATAG…RDMQ), 1431 to 1654 (LEEA…SMGA), 1666 to 1747 (QRKH…FLSS), 1822 to 1841 (AKEE…DWSD), and 1879 to 1910 (DACS…AGRT). Composition is skewed to low complexity over residues 1239-1257 (AAAA…VQGA) and 1405-1414 (ATAGEGEQQT). Residues 1440–1469 (KKKKKKEKKEKKEKKEKKEKKEKKEKKKKK) are compositionally biased toward basic residues. The segment covering 1492–1502 (PAAAIPSVLLP) has biased composition (low complexity). A compositionally biased stretch (basic residues) spans 1517–1526 (KKEKKEKKKK). The segment covering 1550–1561 (PAAAIPSILLPA) has biased composition (low complexity). Positions 1569–1584 (EKPKEKKTEKKKEKHT) are enriched in basic and acidic residues. The segment covering 1595–1604 (LPESETTAVV) has biased composition (polar residues). Composition is skewed to low complexity over residues 1620–1629 (VPSSIASSEA) and 1675–1698 (SSSS…SSSS). The span at 1701 to 1711 (AETRAKADALR) shows a compositional bias: basic and acidic residues. Low complexity-rich tracts occupy residues 1712-1722 (ARLQAAQARLA) and 1729-1747 (VSSS…FLSS). Residues 1766-1828 (QQRLQKMVSG…TRRAKEEKDL (63 aa)) adopt a coiled-coil conformation. Positions 1890 to 1904 (ESRTTAGAKLRQQQL) are enriched in polar residues.

It is found in the membrane. Its function is as follows. Regulates microneme secretion. Probably involved in regulation of rhoptry and dense granule secretion. The chain is C2 domain-containing protein from Toxoplasma gondii.